Consider the following 176-residue polypeptide: ATP-dependent protease subunit HslV (176 aa).

Threonine 5 is an active-site residue. Na(+) is bound by residues glycine 161, cysteine 164, and threonine 167.

The protein belongs to the peptidase T1B family. HslV subfamily. In terms of assembly, a double ring-shaped homohexamer of HslV is capped on each side by a ring-shaped HslU homohexamer. The assembly of the HslU/HslV complex is dependent on binding of ATP.

It localises to the cytoplasm. The enzyme catalyses ATP-dependent cleavage of peptide bonds with broad specificity.. Its activity is regulated as follows. Allosterically activated by HslU binding. Protease subunit of a proteasome-like degradation complex believed to be a general protein degrading machinery. This chain is ATP-dependent protease subunit HslV, found in Sulfurovum sp. (strain NBC37-1).